The chain runs to 315 residues: Methionyl-tRNA formyltransferase (315 aa).

Residue 107–110 coordinates (6S)-5,6,7,8-tetrahydrofolate; it reads SLLP.

Belongs to the Fmt family.

The catalysed reaction is L-methionyl-tRNA(fMet) + (6R)-10-formyltetrahydrofolate = N-formyl-L-methionyl-tRNA(fMet) + (6S)-5,6,7,8-tetrahydrofolate + H(+). Attaches a formyl group to the free amino group of methionyl-tRNA(fMet). The formyl group appears to play a dual role in the initiator identity of N-formylmethionyl-tRNA by promoting its recognition by IF2 and preventing the misappropriation of this tRNA by the elongation apparatus. The chain is Methionyl-tRNA formyltransferase from Borrelia garinii subsp. bavariensis (strain ATCC BAA-2496 / DSM 23469 / PBi) (Borreliella bavariensis).